The sequence spans 291 residues: START domain-containing protein 10 (291 aa).

N-acetylmethionine is present on Met1. The tract at residues 1–23 (MEKPAASTEPQGSRPALGRESVQ) is disordered. The START domain maps to 14–224 (RPALGRESVQ…MYKACIKYPE (211 aa)). Residues Lys94, Lys197, and Lys202 each carry the N6-succinyllysine modification. Residues Ser253, Ser259, Ser284, and Ser289 each carry the phosphoserine modification. The segment at 260–291 (LENIDESAVTESREERAGGAGGEGSDDDTSLT) is disordered.

Phosphorylation at Ser-284 by CK2 negatively regulates lipid transfer activity, possibly by decreasing membrane association. In terms of tissue distribution, testis, kidney, liver, and intestine with the highest level in the testis.

The protein resides in the cell projection. The protein localises to the cilium. Its subcellular location is the flagellum. It is found in the cytoplasm. It localises to the membrane. In terms of biological role, phospholipid transfer protein that preferentially selects lipid species containing a palmitoyl or stearoyl chain on the sn-1 and an unsaturated fatty acyl chain (18:1 or 18:2) on the sn-2 position. Able to transfer phosphatidylcholine (PC) and phosphatidyetanolamline (PE) between membranes. May play metabolic roles in sperm maturation or fertilization. The polypeptide is START domain-containing protein 10 (Stard10) (Mus musculus (Mouse)).